The primary structure comprises 485 residues: tRNA sulfurtransferase (485 aa).

Positions 61 to 165 (EELIALLQRI…DDKMMLVKTR (105 aa)) constitute a THUMP domain. Residues 183-184 (LI), lysine 265, glycine 287, and glutamine 296 each bind ATP. Cysteines 344 and 456 form a disulfide. The 80-residue stretch at 404-483 (LGENEVILDI…FSNVRVFAKN (80 aa)) folds into the Rhodanese domain. Cysteine 456 (cysteine persulfide intermediate) is an active-site residue.

This sequence belongs to the ThiI family.

The protein localises to the cytoplasm. The catalysed reaction is [ThiI sulfur-carrier protein]-S-sulfanyl-L-cysteine + a uridine in tRNA + 2 reduced [2Fe-2S]-[ferredoxin] + ATP + H(+) = [ThiI sulfur-carrier protein]-L-cysteine + a 4-thiouridine in tRNA + 2 oxidized [2Fe-2S]-[ferredoxin] + AMP + diphosphate. It carries out the reaction [ThiS sulfur-carrier protein]-C-terminal Gly-Gly-AMP + S-sulfanyl-L-cysteinyl-[cysteine desulfurase] + AH2 = [ThiS sulfur-carrier protein]-C-terminal-Gly-aminoethanethioate + L-cysteinyl-[cysteine desulfurase] + A + AMP + 2 H(+). It participates in cofactor biosynthesis; thiamine diphosphate biosynthesis. Catalyzes the ATP-dependent transfer of a sulfur to tRNA to produce 4-thiouridine in position 8 of tRNAs, which functions as a near-UV photosensor. Also catalyzes the transfer of sulfur to the sulfur carrier protein ThiS, forming ThiS-thiocarboxylate. This is a step in the synthesis of thiazole, in the thiamine biosynthesis pathway. The sulfur is donated as persulfide by IscS. The chain is tRNA sulfurtransferase from Haemophilus influenzae (strain 86-028NP).